A 210-amino-acid polypeptide reads, in one-letter code: ATP-dependent Clp protease proteolytic subunit (210 aa).

Serine 106 (nucleophile) is an active-site residue. Histidine 131 is an active-site residue.

This sequence belongs to the peptidase S14 family. As to quaternary structure, fourteen ClpP subunits assemble into 2 heptameric rings which stack back to back to give a disk-like structure with a central cavity, resembling the structure of eukaryotic proteasomes.

The protein resides in the cytoplasm. The enzyme catalyses Hydrolysis of proteins to small peptides in the presence of ATP and magnesium. alpha-casein is the usual test substrate. In the absence of ATP, only oligopeptides shorter than five residues are hydrolyzed (such as succinyl-Leu-Tyr-|-NHMec, and Leu-Tyr-Leu-|-Tyr-Trp, in which cleavage of the -Tyr-|-Leu- and -Tyr-|-Trp bonds also occurs).. Its function is as follows. Cleaves peptides in various proteins in a process that requires ATP hydrolysis. Has a chymotrypsin-like activity. Plays a major role in the degradation of misfolded proteins. This chain is ATP-dependent Clp protease proteolytic subunit, found in Afipia carboxidovorans (strain ATCC 49405 / DSM 1227 / KCTC 32145 / OM5) (Oligotropha carboxidovorans).